A 499-amino-acid polypeptide reads, in one-letter code: Low-affinity inorganic phosphate transporter PitA (499 aa).

Residues 1–4 (MLHL) are Periplasmic-facing. Residues 5 to 25 (FAGLDLHTGLLLLLALAFVLF) traverse the membrane as a helical segment. The Cytoplasmic portion of the chain corresponds to 26–51 (YEAINGFHDTANAVATVIYTRAMRSQ). Residues 52–72 (LAVVMAAVFNFLGVLLGGLSV) traverse the membrane as a helical segment. Topologically, residues 73–93 (AYAIVHMLPTDLLLNMGSSHG) are periplasmic. Residues 94-114 (LAMVFSMLLAAIIWNLGTWYF) form a helical membrane-spanning segment. Topologically, residues 115 to 123 (GLPASSSHT) are cytoplasmic. The chain crosses the membrane as a helical span at residues 124-144 (LIGAIIGIGLTNALMTGTSVV). Residues 145–154 (DALNIPKVLS) are Periplasmic-facing. A helical membrane pass occupies residues 155–175 (IFGSLIVSPIVGLVFAGGLIF). The Cytoplasmic segment spans residues 176–206 (LLRRYWSGTKKRARIHLTPAEREKKDGKKKP). The chain crosses the membrane as a helical span at residues 207–227 (PFWTRIALILSAIGVAFSHGA). Residues 228–232 (NDGQK) are Periplasmic-facing. A helical membrane pass occupies residues 233–253 (GIGLVMLVLIGVAPAGFVVNM). Residues 254-381 (NATGYEITRT…KSDMLSTIEY (128 aa)) lie on the Cytoplasmic side of the membrane. A helical membrane pass occupies residues 382-402 (APVWIIMAVALALGIGTMIGW). Residues 403-429 (RRVATTIGEKIGKKGMTYAQGMSAQMT) lie on the Periplasmic side of the membrane. A helical transmembrane segment spans residues 430-450 (AAVSIGLASYTGMPVSTTHVL). Residues 451-472 (SSSVAGTMVVDGGGLQRKTVTS) lie on the Cytoplasmic side of the membrane. Residues 473 to 493 (ILMAWVFTLPAAVLLSGGLYW) form a helical membrane-spanning segment. Topologically, residues 494–499 (LSLQFL) are periplasmic.

Belongs to the inorganic phosphate transporter (PiT) (TC 2.A.20) family. Pit subfamily.

It is found in the cell inner membrane. The enzyme catalyses phosphate(in) + H(+)(in) = phosphate(out) + H(+)(out). Low-affinity inorganic phosphate transporter. This chain is Low-affinity inorganic phosphate transporter PitA (pitA), found in Escherichia coli O157:H7.